The following is a 262-amino-acid chain: 14-3-3-like protein B (262 aa).

This sequence belongs to the 14-3-3 family.

The chain is 14-3-3-like protein B from Hordeum vulgare (Barley).